The following is a 181-amino-acid chain: Ribosome maturation factor RimP (181 aa).

This sequence belongs to the RimP family.

It localises to the cytoplasm. In terms of biological role, required for maturation of 30S ribosomal subunits. The chain is Ribosome maturation factor RimP from Mycolicibacterium smegmatis (strain ATCC 700084 / mc(2)155) (Mycobacterium smegmatis).